Consider the following 318-residue polypeptide: Ferrochelatase (318 aa).

The Fe cation site is built by H186 and E264.

The protein belongs to the ferrochelatase family.

It is found in the cytoplasm. It catalyses the reaction heme b + 2 H(+) = protoporphyrin IX + Fe(2+). It functions in the pathway porphyrin-containing compound metabolism; protoheme biosynthesis; protoheme from protoporphyrin-IX: step 1/1. Catalyzes the ferrous insertion into protoporphyrin IX. The protein is Ferrochelatase of Chlamydia abortus (strain DSM 27085 / S26/3) (Chlamydophila abortus).